A 78-amino-acid polypeptide reads, in one-letter code: MALFEDIQAVIAEQLNVDAAQVTPEAEFVKDLGADSLDVVELIMALEEKFGIEIPDEQAEKIVNVGDVVKYIEDNKLA.

One can recognise a Carrier domain in the interval 1–76 (MALFEDIQAV…DVVKYIEDNK (76 aa)). Ser36 carries the post-translational modification O-(pantetheine 4'-phosphoryl)serine.

The protein belongs to the acyl carrier protein (ACP) family. In terms of processing, 4'-phosphopantetheine is transferred from CoA to a specific serine of apo-ACP by AcpS. This modification is essential for activity because fatty acids are bound in thioester linkage to the sulfhydryl of the prosthetic group.

It is found in the cytoplasm. It functions in the pathway lipid metabolism; fatty acid biosynthesis. Functionally, carrier of the growing fatty acid chain in fatty acid biosynthesis. This is Acyl carrier protein from Helicobacter pylori (strain Shi470).